A 616-amino-acid polypeptide reads, in one-letter code: 2-isopropylmalate synthase (616 aa).

Positions 1–34 (MSPNDAFISAPAKIETPVGPRNEGQPAWNKQRGS) are disordered. A Pyruvate carboxyltransferase domain is found at 67–341 (PQWCAVDLRD…DPQLDFTDIR (275 aa)). 4 residues coordinate Mg(2+): Asp76, His280, His282, and Asn316. Residues 490–616 (RTAPVEQIAL…NHEAVLAGGV (127 aa)) form a regulatory domain region.

This sequence belongs to the alpha-IPM synthase/homocitrate synthase family. LeuA type 2 subfamily. As to quaternary structure, homodimer. The cofactor is Mg(2+).

Its subcellular location is the cytoplasm. The enzyme catalyses 3-methyl-2-oxobutanoate + acetyl-CoA + H2O = (2S)-2-isopropylmalate + CoA + H(+). Its pathway is amino-acid biosynthesis; L-leucine biosynthesis; L-leucine from 3-methyl-2-oxobutanoate: step 1/4. Its activity is regulated as follows. Inhibited by L-leucine, the pathway end product. Functionally, catalyzes the condensation of the acetyl group of acetyl-CoA with 3-methyl-2-oxobutanoate (2-ketoisovalerate) to form 3-carboxy-3-hydroxy-4-methylpentanoate (2-isopropylmalate). Complements an E.coli leuA deletion. The polypeptide is 2-isopropylmalate synthase (Corynebacterium glutamicum (strain ATCC 13032 / DSM 20300 / JCM 1318 / BCRC 11384 / CCUG 27702 / LMG 3730 / NBRC 12168 / NCIMB 10025 / NRRL B-2784 / 534)).